Reading from the N-terminus, the 554-residue chain is Glypican-1 (554 aa).

An N-terminal signal peptide occupies residues 1–21; it reads MERLCWGWWWHLGILCLMHWA. 7 cysteine pairs are disulfide-bonded: cysteine 32/cysteine 68, cysteine 62/cysteine 256, cysteine 69/cysteine 259, cysteine 191/cysteine 343, cysteine 246/cysteine 279, cysteine 268/cysteine 415, and cysteine 272/cysteine 401. Asparagine 79 and asparagine 116 each carry an N-linked (GlcNAc...) asparagine glycan. A disordered region spans residues 346-369; that stretch reads PKKTNKGSKSEERRRKGKATQEDK. Basic and acidic residues predominate over residues 353-369; sequence SKSEERRRKGKATQEDK. Residues serine 486, serine 488, and serine 490 are each glycosylated (O-linked (Xyl...) (heparan sulfate) serine).

This sequence belongs to the glypican family. O-glycosylated with heparan sulfate side chains.

It is found in the cell membrane. It localises to the secreted. The protein localises to the extracellular space. In terms of biological role, cell surface proteoglycan that bears heparan sulfate. The polypeptide is Glypican-1 (gpc1) (Xenopus tropicalis (Western clawed frog)).